Reading from the N-terminus, the 127-residue chain is Chorismate mutase AroH (127 aa).

The 119-residue stretch at 3 to 121 (IRGIRGATTV…VVVLRPDLSL (119 aa)) folds into the Chorismate mutase aroH-type domain. Residues arginine 7, 74 to 78 (TCMQE), arginine 90, and tyrosine 108 contribute to the prephenate site.

In terms of assembly, homotrimer.

It is found in the cytoplasm. The catalysed reaction is chorismate = prephenate. The protein operates within metabolic intermediate biosynthesis; prephenate biosynthesis; prephenate from chorismate: step 1/1. In terms of biological role, catalyzes the Claisen rearrangement of chorismate to prephenate. Probably involved in the aromatic amino acid biosynthesis. The sequence is that of Chorismate mutase AroH from Bacillus subtilis (strain 168).